Reading from the N-terminus, the 120-residue chain is uncharacterized protein (120 aa).

A PRD domain is found at 13–119; the sequence is VIDKDICKGM…YGLWMAANEE (107 aa).

This is an uncharacterized protein from Escherichia coli (strain K12).